A 307-amino-acid chain; its full sequence is UDP-N-acetylenolpyruvoylglucosamine reductase (307 aa).

The region spanning 33–197 (TGGNADFYIT…LEAAFTLAPG (165 aa)) is the FAD-binding PCMH-type domain. Arginine 176 is a catalytic residue. The Proton donor role is filled by serine 226. The active site involves glutamate 296.

This sequence belongs to the MurB family. The cofactor is FAD.

It localises to the cytoplasm. It catalyses the reaction UDP-N-acetyl-alpha-D-muramate + NADP(+) = UDP-N-acetyl-3-O-(1-carboxyvinyl)-alpha-D-glucosamine + NADPH + H(+). It participates in cell wall biogenesis; peptidoglycan biosynthesis. Its function is as follows. Cell wall formation. This Staphylococcus aureus (strain NCTC 8325 / PS 47) protein is UDP-N-acetylenolpyruvoylglucosamine reductase.